The primary structure comprises 485 residues: Glutamyl-tRNA(Gln) amidotransferase subunit A (485 aa).

Catalysis depends on charge relay system residues Lys-76 and Ser-151. Residue Ser-175 is the Acyl-ester intermediate of the active site.

This sequence belongs to the amidase family. GatA subfamily. As to quaternary structure, heterotrimer of A, B and C subunits.

The catalysed reaction is L-glutamyl-tRNA(Gln) + L-glutamine + ATP + H2O = L-glutaminyl-tRNA(Gln) + L-glutamate + ADP + phosphate + H(+). Functionally, allows the formation of correctly charged Gln-tRNA(Gln) through the transamidation of misacylated Glu-tRNA(Gln) in organisms which lack glutaminyl-tRNA synthetase. The reaction takes place in the presence of glutamine and ATP through an activated gamma-phospho-Glu-tRNA(Gln). This chain is Glutamyl-tRNA(Gln) amidotransferase subunit A, found in Methylococcus capsulatus (strain ATCC 33009 / NCIMB 11132 / Bath).